The sequence spans 174 residues: uncharacterized protein (174 aa).

The N-acetyltransferase domain occupies 42–174 (SSNKNINLYE…GVKGMFWYPR (133 aa)).

Belongs to the acetyltransferase family. Ycf52 subfamily.

The protein localises to the plastid. It is found in the chloroplast. This is an uncharacterized protein from Pyropia yezoensis (Susabi-nori).